Here is a 498-residue protein sequence, read N- to C-terminus: ATP synthase subunit beta, chloroplastic (498 aa).

172 to 179 provides a ligand contact to ATP; it reads GGAGVGKT.

It belongs to the ATPase alpha/beta chains family. As to quaternary structure, F-type ATPases have 2 components, CF(1) - the catalytic core - and CF(0) - the membrane proton channel. CF(1) has five subunits: alpha(3), beta(3), gamma(1), delta(1), epsilon(1). CF(0) has four main subunits: a(1), b(1), b'(1) and c(9-12).

Its subcellular location is the plastid. The protein resides in the chloroplast thylakoid membrane. It catalyses the reaction ATP + H2O + 4 H(+)(in) = ADP + phosphate + 5 H(+)(out). In terms of biological role, produces ATP from ADP in the presence of a proton gradient across the membrane. The catalytic sites are hosted primarily by the beta subunits. In Populus alba (White poplar), this protein is ATP synthase subunit beta, chloroplastic.